We begin with the raw amino-acid sequence, 110 residues long: Acid stress chaperone HdeA (110 aa).

The first 21 residues, 1 to 21, serve as a signal peptide directing secretion; sequence MKKVLGVILGGLLLLPVVSNA. Cys39 and Cys87 are oxidised to a cystine.

The protein belongs to the HdeA family.

It localises to the periplasm. Its function is as follows. Required for optimal acid stress protection. Exhibits a chaperone-like activity only at low pH by suppressing non-specifically the aggregation of denaturated periplasmic proteins. This Escherichia coli O157:H7 protein is Acid stress chaperone HdeA.